Reading from the N-terminus, the 308-residue chain is Nuclear transcription factor Y subunit A-5 (308 aa).

Residues 1–10 show a composition bias toward basic and acidic residues; the sequence is MQVFQRKEDS. 2 disordered regions span residues 1 to 26 and 49 to 71; these read MQVF…IQGS and GLQL…GGGE. Residues 11 to 26 show a composition bias toward polar residues; sequence SWGNSMPTTNSNIQGS. The Subunit association domain (SAD) signature appears at 181 to 204; the sequence is FVNAKQYHAILRRRKHRAKLEAQN. The segment at residues 211–236 is a DNA-binding region (NFYA/HAP2-type); sequence KPYLHESRHLHALKRARGSGGRFLNT. Residues 251-273 form a disordered region; it reads MANGQNFSMSPHGGGSGIGSSSI.

This sequence belongs to the NFYA/HAP2 subunit family. Heterotrimeric transcription factor composed of three components, NF-YA, NF-YB and NF-YC. NF-YB and NF-YC must interact and dimerize for NF-YA association and DNA binding. Expressed in the whole plant, except roots. Present in etiolated seedlings.

The protein localises to the nucleus. In terms of biological role, stimulates the transcription of various genes by recognizing and binding to a CCAAT motif in promoters. Involved in the blue light (BL) and abscisic acid (ABA) signaling pathways. The polypeptide is Nuclear transcription factor Y subunit A-5 (NFYA5) (Arabidopsis thaliana (Mouse-ear cress)).